The primary structure comprises 879 residues: Alanine--tRNA ligase (879 aa).

Zn(2+)-binding residues include His-566, His-570, Cys-668, and His-672.

The protein belongs to the class-II aminoacyl-tRNA synthetase family. Requires Zn(2+) as cofactor.

The protein resides in the cytoplasm. The catalysed reaction is tRNA(Ala) + L-alanine + ATP = L-alanyl-tRNA(Ala) + AMP + diphosphate. Catalyzes the attachment of alanine to tRNA(Ala) in a two-step reaction: alanine is first activated by ATP to form Ala-AMP and then transferred to the acceptor end of tRNA(Ala). Also edits incorrectly charged Ser-tRNA(Ala) and Gly-tRNA(Ala) via its editing domain. This chain is Alanine--tRNA ligase, found in Clostridium novyi (strain NT).